The sequence spans 383 residues: ATP phosphoribosyltransferase regulatory subunit (383 aa).

It belongs to the class-II aminoacyl-tRNA synthetase family. HisZ subfamily. In terms of assembly, heteromultimer composed of HisG and HisZ subunits.

It localises to the cytoplasm. It participates in amino-acid biosynthesis; L-histidine biosynthesis; L-histidine from 5-phospho-alpha-D-ribose 1-diphosphate: step 1/9. Required for the first step of histidine biosynthesis. May allow the feedback regulation of ATP phosphoribosyltransferase activity by histidine. This is ATP phosphoribosyltransferase regulatory subunit from Cupriavidus taiwanensis (strain DSM 17343 / BCRC 17206 / CCUG 44338 / CIP 107171 / LMG 19424 / R1) (Ralstonia taiwanensis (strain LMG 19424)).